We begin with the raw amino-acid sequence, 89 residues long: Small ribosomal subunit protein uS15 (89 aa).

The protein belongs to the universal ribosomal protein uS15 family. Part of the 30S ribosomal subunit. Forms a bridge to the 50S subunit in the 70S ribosome, contacting the 23S rRNA.

In terms of biological role, one of the primary rRNA binding proteins, it binds directly to 16S rRNA where it helps nucleate assembly of the platform of the 30S subunit by binding and bridging several RNA helices of the 16S rRNA. Functionally, forms an intersubunit bridge (bridge B4) with the 23S rRNA of the 50S subunit in the ribosome. This is Small ribosomal subunit protein uS15 from Erwinia tasmaniensis (strain DSM 17950 / CFBP 7177 / CIP 109463 / NCPPB 4357 / Et1/99).